Here is a 311-residue protein sequence, read N- to C-terminus: 4-diphosphocytidyl-2-C-methyl-D-erythritol kinase (311 aa).

The active site involves Lys-11. An ATP-binding site is contributed by 94 to 104 (PVAAGLAGGSA). Asp-136 is an active-site residue.

It belongs to the GHMP kinase family. IspE subfamily.

The catalysed reaction is 4-CDP-2-C-methyl-D-erythritol + ATP = 4-CDP-2-C-methyl-D-erythritol 2-phosphate + ADP + H(+). It participates in isoprenoid biosynthesis; isopentenyl diphosphate biosynthesis via DXP pathway; isopentenyl diphosphate from 1-deoxy-D-xylulose 5-phosphate: step 3/6. In terms of biological role, catalyzes the phosphorylation of the position 2 hydroxy group of 4-diphosphocytidyl-2C-methyl-D-erythritol. This is 4-diphosphocytidyl-2-C-methyl-D-erythritol kinase from Synechococcus sp. (strain JA-2-3B'a(2-13)) (Cyanobacteria bacterium Yellowstone B-Prime).